A 304-amino-acid chain; its full sequence is Recombination-associated protein RdgC (304 aa).

Belongs to the RdgC family.

It is found in the cytoplasm. It localises to the nucleoid. Functionally, may be involved in recombination. The sequence is that of Recombination-associated protein RdgC from Shewanella baltica (strain OS223).